We begin with the raw amino-acid sequence, 237 residues long: Orotidine 5'-phosphate decarboxylase (237 aa).

Substrate-binding positions include Asp11, Lys34, 61–70, Thr124, Arg186, Gln195, Gly215, and Arg216; that span reads DLKLHDIPNT. The Proton donor role is filled by Lys63.

Belongs to the OMP decarboxylase family. Type 1 subfamily. Homodimer.

It carries out the reaction orotidine 5'-phosphate + H(+) = UMP + CO2. The protein operates within pyrimidine metabolism; UMP biosynthesis via de novo pathway; UMP from orotate: step 2/2. Its function is as follows. Catalyzes the decarboxylation of orotidine 5'-monophosphate (OMP) to uridine 5'-monophosphate (UMP). The chain is Orotidine 5'-phosphate decarboxylase from Lactococcus lactis subsp. lactis (strain IL1403) (Streptococcus lactis).